A 644-amino-acid chain; its full sequence is MKANGLDNDPARTGMERTDIDSEHPEAQPLLNNNHRTLGAGSANGPAVNEGRDIESDGFIKDSLFQIRKGYRIFIHNSKWILNILILINTIWLVTTLISDFFFNINILFGFSNRYASFNDLTLIFISIIANSFNLWFNKLGLYSALDYSLNVTLCVLTLFNLALTYLIKYTRQRIGFVGTFTYLWTSFSFFIGAILDWYLLFYNNSINEPLEERRIDDANISTFNENHTNSTENRDRSQYGSGSPTPTHRSQLVQNKHTLTEWVSIGFRNTIKFLILIFFALFTLNTLLTTLDTYRLTHKLPITVQSPSYEAFHYVDAAKTYQLHITCYGDVFDQENNTDLSENKKQPIILFEHGGYDTGYLSATWIEELYHLDKIQRYCLYDRPGYGLSDSPPAPISIAMVAESLRYALIKDAKIKGPFTTVGYDLGGLFTRVFTAKNVDIVDSMMLVESWHEELLLKNYIQRLLPPGRGDGDDGDDGNGNDGDGRNHDKTWLPSEIERHNEFRLWWKGIWSSLGWRLQTSWLLAHHGSKERIYGRDMKYQGRFLRSKFLESVTSSILSYRDVTNNAESLQNVKTSIVSSKEMVKKSALWGDWQRDLTKISHKTQEWKIVEGGHEIYKYGLGKQQTQEVLLRLIGELGKLTED.

Positions 1-35 (MKANGLDNDPARTGMERTDIDSEHPEAQPLLNNNH) are disordered. At 1–90 (MKANGLDNDP…ILNILILINT (90 aa)) the chain is on the cytoplasmic side. Over residues 14–26 (GMERTDIDSEHPE) the composition is skewed to basic and acidic residues. 3 positions are modified to phosphoserine: Ser-22, Ser-56, and Ser-63. A helical transmembrane segment spans residues 91-111 (IWLVTTLISDFFFNINILFGF). Over 112 to 122 (SNRYASFNDLT) the chain is Vacuolar. The helical transmembrane segment at 123–143 (LIFISIIANSFNLWFNKLGLY) threads the bilayer. The Cytoplasmic portion of the chain corresponds to 144 to 147 (SALD). Residues 148 to 168 (YSLNVTLCVLTLFNLALTYLI) traverse the membrane as a helical segment. At 169-174 (KYTRQR) the chain is on the vacuolar side. The helical transmembrane segment at 175–195 (IGFVGTFTYLWTSFSFFIGAI) threads the bilayer. Topologically, residues 196–271 (LDWYLLFYNN…EWVSIGFRNT (76 aa)) are cytoplasmic. Residues 225 to 251 (NENHTNSTENRDRSQYGSGSPTPTHRS) are disordered. Residues 239-251 (QYGSGSPTPTHRS) show a composition bias toward polar residues. At Ser-244 the chain carries Phosphoserine. A helical transmembrane segment spans residues 272 to 292 (IKFLILIFFALFTLNTLLTTL). The Vacuolar segment spans residues 293 to 644 (DTYRLTHKLP…IGELGKLTED (352 aa)). The 272-residue stretch at 348–619 (PIILFEHGGY…IVEGGHEIYK (272 aa)) folds into the AB hydrolase-1 domain. A disordered region spans residues 469–492 (GRGDGDDGDDGNGNDGDGRNHDKT).

Its subcellular location is the vacuole membrane. This is an uncharacterized protein from Saccharomyces cerevisiae (strain ATCC 204508 / S288c) (Baker's yeast).